The chain runs to 436 residues: MDMKLQQVQVLKPQLTQELRQAITLLGYHSAELAEYIDELSLENPLIERKETDTPPLSYHKTNKNRMNAQEAGLQLSNPQKTLQDALKQQSLDMNLTNTEKKIFNYLIHSLDSNGYLEEDIEEAARRLSVSAKEAEAVLAKLQSLEPAGIGARSLQECILLQLQRLPNRNEQAEMLVSAHFDAFAQKKWKTLSVETGIPLHTIQDISDDIAALHPRPGLLFARPEQDVYIEPDIFITVKNGHIAAELNTRSFPEIDLHPQYRTLLSSGSCQDTVSYLSAKYQEWRWLSRALRQRKQTITRIINELITRQKDFFLKGRSAMKPLTLREVADCLSLHESTVSRAIKGKTIQTPYGLFEMKLFFSAKAEASGDGDASNYAVKTHLENLINQEDKTKPLSDQKLVDLLYEQHGIQISRRTVAKYRDQMNIPSSAARKRYK.

Positions threonine 324 to isoleucine 343 form a DNA-binding region, H-T-H motif. The RPON box motif lies at serine 413–arginine 421.

The protein belongs to the sigma-54 factor family. Interacts transiently with the RNAP core.

Its function is as follows. Sigma factors are initiation factors that promote the attachment of RNA polymerase (RNAP) to specific initiation sites and are then released. This sigma factor is responsible for the expression of the levanase operon. The open complex (sigma-54 and core RNA polymerase) serves as the receptor for receipt of the melting signal from the remotely bound activator protein LevR for the expression of the levanase operon. Associates with the RNAP core only in stationary phase cells. In Bacillus subtilis (strain 168), this protein is RNA polymerase sigma-54 factor (sigL).